Here is a 485-residue protein sequence, read N- to C-terminus: Arginine/agmatine antiporter (485 aa).

The next 12 helical transmembrane spans lie at 12-34, 38-60, 89-111, 126-148, 155-177, 211-230, 243-265, 291-313, 363-385, 400-422, 427-446, and 461-483; these read GTIA…SLPQ, ATAG…FFIA, IGFT…YAVI, GGNT…FIVL, SIIN…ILTA, TMLV…VMSG, VLGF…GSLF, VLMN…IIVA, WNTM…AAFL, IKAP…LIYA, YLFM…IDAG, and IVGM…TGRI.

It belongs to the amino acid-polyamine-organocation (APC) superfamily. Basic amino acid/polyamine antiporter (APA) (TC 2.A.3.2) family.

The protein resides in the cell inner membrane. Catalyzes the exchange of L-arginine for agmatine. The arginine uptake by the bacterium in the macrophage may be a virulence factor against the host innate immune response. In Chlamydia pneumoniae (Chlamydophila pneumoniae), this protein is Arginine/agmatine antiporter (aaxC).